The sequence spans 683 residues: E3 ubiquitin-protein ligase WAVH1 (683 aa).

The RING-type; atypical zinc finger occupies 130-176 (CGICLQSVKSGQGTAIFTAECSHTFHFPCVTSRAAANHNRLASCPVC). Residues 302–438 (DLVAVLDVSG…AHSRIPIHTI (137 aa)) form the VWFA domain.

As to expression, expressed in root tips and leaf primordia.

The catalysed reaction is S-ubiquitinyl-[E2 ubiquitin-conjugating enzyme]-L-cysteine + [acceptor protein]-L-lysine = [E2 ubiquitin-conjugating enzyme]-L-cysteine + N(6)-ubiquitinyl-[acceptor protein]-L-lysine.. In terms of biological role, E3 ubiquitin-protein ligase involved in the regulation of root growth. Acts as a positive regulator of root gravitropism. Possesses E3 protein ligase activity in vitro. The polypeptide is E3 ubiquitin-protein ligase WAVH1 (Arabidopsis thaliana (Mouse-ear cress)).